A 217-amino-acid chain; its full sequence is Proteasome subunit beta type-9 (217 aa).

The propeptide at 1 to 18 (MLEESSEPGWLSEEVKTG) is removed in mature form. Residue Thr19 is the Nucleophile of the active site.

Belongs to the peptidase T1B family. As to quaternary structure, the 26S proteasome consists of a 20S proteasome core and two 19S regulatory subunits. The 20S proteasome core is composed of 28 subunits that are arranged in four stacked rings, resulting in a barrel-shaped structure. The two end rings are each formed by seven alpha subunits, and the two central rings are each formed by seven beta subunits. The catalytic chamber with the active sites is on the inside of the barrel. Component of the immunoproteasome, where it displaces the equivalent housekeeping subunit PSMB6. Autocleaved. The resulting N-terminal Thr residue of the mature subunit is responsible for the nucleophile proteolytic activity.

Its subcellular location is the cytoplasm. The protein localises to the nucleus. The catalysed reaction is Cleavage of peptide bonds with very broad specificity.. The proteasome is a multicatalytic proteinase complex which is characterized by its ability to cleave peptides with Arg, Phe, Tyr, Leu, and Glu adjacent to the leaving group at neutral or slightly basic pH. The proteasome has an ATP-dependent proteolytic activity. This subunit is involved in antigen processing to generate class I binding peptides. This chain is Proteasome subunit beta type-9 (psmb9-a), found in Salmo salar (Atlantic salmon).